A 92-amino-acid chain; its full sequence is Small ribosomal subunit protein uS19c (92 aa).

It belongs to the universal ribosomal protein uS19 family.

The protein localises to the plastid. The protein resides in the chloroplast. Its function is as follows. Protein S19 forms a complex with S13 that binds strongly to the 16S ribosomal RNA. The polypeptide is Small ribosomal subunit protein uS19c (Acorus calamus (Sweet flag)).